Reading from the N-terminus, the 894-residue chain is Alpha-actinin-2 (894 aa).

Positions 1 to 254 (MNQIEPGVQY…IMTYVSCFYH (254 aa)) are actin-binding. Calponin-homology (CH) domains lie at 38 to 142 (KQQR…LRFA) and 151 to 257 (TSAK…HAFA). T237 bears the Phosphothreonine mark. 4 Spectrin repeats span residues 281 to 391 (RLME…WLLN), 401 to 506 (HLAE…ALER), 516 to 627 (QLHL…SLQE), and 637 to 740 (RLRR…EVET). EF-hand domains follow at residues 753–788 (EQMN…MGYD) and 789–824 (LGEA…ETAD). The Ca(2+) site is built by D766, N770, D777, D802, N804, and T808.

It belongs to the alpha-actinin family. As to quaternary structure, homodimer; antiparallel. Also forms heterodimers with ACTN3. Interacts with ADAM12, MYOZ1, MYOZ2 and MYOZ3. Interacts via its C-terminal region with the LDB3 PDZ domain. Interacts with XIRP2. Interacts with DST (via N-terminus). Interacts with PARVB. Interacts with SYNPO2. In terms of processing, ubiquitinated by FBXL22, leading to proteasomal degradation.

Its subcellular location is the cytoplasm. It localises to the myofibril. The protein resides in the sarcomere. It is found in the z line. Functionally, F-actin cross-linking protein which is thought to anchor actin to a variety of intracellular structures. This is a bundling protein. The sequence is that of Alpha-actinin-2 (ACTN2) from Bos taurus (Bovine).